The chain runs to 468 residues: Aspartate ammonia-lyase (468 aa).

Residues Thr99, Ser138, Thr139, Asn140, and Thr185 each contribute to the L-aspartate site. An SS loop region spans residues 315–324; it reads GSSIMPGKVN. Ser316 serves as the catalytic Proton acceptor. Positions 317 and 322 each coordinate L-aspartate.

Belongs to the class-II fumarase/aspartase family. Aspartase subfamily. As to quaternary structure, homotetramer.

The catalysed reaction is L-aspartate = fumarate + NH4(+). In terms of biological role, catalyzes the reversible conversion of L-aspartate to fumarate and ammonia. The protein is Aspartate ammonia-lyase (aspA) of Helicobacter pylori (strain ATCC 700392 / 26695) (Campylobacter pylori).